A 439-amino-acid polypeptide reads, in one-letter code: Ornithine aminotransferase, mitochondrial (439 aa).

The N-terminal 25 residues, 1–25, are a transit peptide targeting the mitochondrion; the sequence is MLSKLASLQTIAALRRGVHTSVASA. An N6-acetyllysine mark is found at K49 and K66. K102 is subject to N6-succinyllysine. K107 carries the post-translational modification N6-acetyllysine; alternate. An N6-succinyllysine; alternate modification is found at K107. The residue at position 292 (K292) is an N6-(pyridoxal phosphate)lysine. K362 carries the N6-acetyllysine; alternate modification. An N6-succinyllysine; alternate modification is found at K362. 2 positions are modified to N6-acetyllysine: K386 and K392. The residue at position 405 (K405) is an N6-acetyllysine; alternate. K405 is modified (N6-succinyllysine; alternate). K421 bears the N6-acetyllysine mark.

This sequence belongs to the class-III pyridoxal-phosphate-dependent aminotransferase family. Homohexamer. Pyridoxal 5'-phosphate serves as cofactor.

It is found in the mitochondrion matrix. The catalysed reaction is L-ornithine + 2-oxoglutarate = L-glutamate 5-semialdehyde + L-glutamate. It participates in amino-acid biosynthesis; L-proline biosynthesis; L-glutamate 5-semialdehyde from L-ornithine: step 1/1. Catalyzes the reversible interconversion of L-ornithine and 2-oxoglutarate to L-glutamate semialdehyde and L-glutamate. This chain is Ornithine aminotransferase, mitochondrial (Oat), found in Mus musculus (Mouse).